The following is a 405-amino-acid chain: MTIDRRALGFGGSERAVYAADPWTTRGRLYPEDDSPTRSDFQRDRDRIVHTTAFRRLKHKTQVFIAQDGDHYRTRLTHTIEVAQIARALARALKLDEDLAEGVALVHDFGHTPFGHTGEDALHEVLLPYGGFDHNAQSLRIVTKLERRYAEFDGINLTWESLEGLVKHNGPLLTPDGVGTRGPVPQPILDYCELHDLELATYASLEAQVAAIADDIAYNTHDIDDGLRSGYLTFEMLEEIPFLAGLMAEVRARYPHLEPSRFTHEIMRRQITRMVEDVIGVAQQRLSLLRPQSAADIRAADRMIATFSDAMAETDRQIKAMLFKRIYRNPDIMRIRAGAAQIVTDLFGAYMASPKEMQSHYWVDHIAGLADAPKARHVGDYLAGMTDTYAISAHRRLFDHTPDLR.

In terms of domain architecture, HD spans 75–219; the sequence is RLTHTIEVAQ…AAIADDIAYN (145 aa).

This sequence belongs to the dGTPase family. Type 2 subfamily.

The chain is Deoxyguanosinetriphosphate triphosphohydrolase-like protein from Rhizobium etli (strain CIAT 652).